A 263-amino-acid chain; its full sequence is MGKLTGKTALITGASQGIGEGIARVFARHGANLILLDISDEIEKLADELGGRGHRCTAVKADVRDFASVQAAVARAKETEGRIDILVNNAGVCRLGNFLDMSEEDRDFHIDINIKGVWNVTKAVLPEMIKRKDGRIVMMSSVTGDMVADPGETAYALSKAAIVGLTKSLAVEYAQSGIRVNAICPGYVRTPMAESIARQSNPDDPESVLTEMAKAIPLRRLADPLEVGELAAFLASDESSYLTGTQNVIDGGSTLPESVSVGV.

10–32 (LITGASQGIGEGIARVFARHGAN) provides a ligand contact to NAD(+). Ser141 provides a ligand contact to substrate. Tyr155 serves as the catalytic Proton acceptor.

This sequence belongs to the short-chain dehydrogenases/reductases (SDR) family.

The protein is Oxidoreductase UcpA (ucpA) of Salmonella typhi.